The primary structure comprises 207 residues: Guanylate kinase (207 aa).

One can recognise a Guanylate kinase-like domain in the interval 4-184; the sequence is GTLYIVSAPS…ALTDLKTIIR (181 aa). 11–18 provides a ligand contact to ATP; it reads APSGAGKS.

This sequence belongs to the guanylate kinase family.

The protein localises to the cytoplasm. It catalyses the reaction GMP + ATP = GDP + ADP. Its function is as follows. Essential for recycling GMP and indirectly, cGMP. The protein is Guanylate kinase of Escherichia coli O6:K15:H31 (strain 536 / UPEC).